A 238-amino-acid chain; its full sequence is Flagellar L-ring protein (238 aa).

The signal sequence occupies residues 1 to 16 (MNKAILAVAMVLLLAG). Cysteine 17 carries the N-palmitoyl cysteine lipid modification. The S-diacylglycerol cysteine moiety is linked to residue cysteine 17.

This sequence belongs to the FlgH family. In terms of assembly, the basal body constitutes a major portion of the flagellar organelle and consists of four rings (L,P,S, and M) mounted on a central rod.

It localises to the cell outer membrane. Its subcellular location is the bacterial flagellum basal body. In terms of biological role, assembles around the rod to form the L-ring and probably protects the motor/basal body from shearing forces during rotation. The polypeptide is Flagellar L-ring protein (Brucella abortus (strain 2308)).